The following is a 595-amino-acid chain: Tumor necrosis factor receptor superfamily member 8 (595 aa).

An N-terminal signal peptide occupies residues 1 to 18 (MRVLLAALGLLFLGALRA). Topologically, residues 19–385 (FPQDRPFEDT…STGKPVLDAG (367 aa)) are extracellular. TNFR-Cys repeat units lie at residues 28–66 (TCHG…TDCR), 68–106 (QCEP…SRVC), and 107–150 (ECRP…TVCE). Intrachain disulfides connect cysteine 29–cysteine 44, cysteine 45–cysteine 58, cysteine 48–cysteine 65, cysteine 69–cysteine 81, cysteine 84–cysteine 98, cysteine 87–cysteine 106, cysteine 108–cysteine 122, and cysteine 131–cysteine 149. Asparagine 32 carries an N-linked (GlcNAc...) asparagine glycan. N-linked (GlcNAc...) asparagine glycosylation occurs at asparagine 101. The interval 167 to 238 (KEPSSGTIPQ…PTQPCPEGSG (72 aa)) is disordered. A compositionally biased stretch (low complexity) spans 179 to 194 (PTPVSPATSSASTMPV). TNFR-Cys repeat units follow at residues 205 to 241 (ASKL…GDCR), 243 to 281 (QCEP…SRTC), and 282 to 325 (ECRP…TTFE). 6 disulfides stabilise this stretch: cysteine 233/cysteine 240, cysteine 244/cysteine 256, cysteine 259/cysteine 273, cysteine 262/cysteine 281, cysteine 283/cysteine 297, and cysteine 289/cysteine 300. Asparagine 276 is a glycosylation site (N-linked (GlcNAc...) asparagine). The interval 323–355 (TFEAPPLGTQPDCNPTPENGEAPASTSPTQSLL) is disordered. Residue asparagine 336 is glycosylated (N-linked (GlcNAc...) asparagine). Polar residues predominate over residues 346 to 355 (ASTSPTQSLL). Residues 386-406 (PVLFWVILVLVVVVGSSAFLL) traverse the membrane as a helical segment. Topologically, residues 407-595 (CHRRACRKRI…DPLPTAASGK (189 aa)) are cytoplasmic. Residues serine 438 and serine 452 each carry the phosphoserine modification. Disordered stretches follow at residues 438–457 (SRPR…TEPV), 485–509 (LQDA…STEH), and 536–595 (EGRG…ASGK). Residues 443–452 (SSTQLRSGAS) are compositionally biased toward polar residues. Residues 499–509 (DLPEPRVSTEH) show a composition bias toward basic and acidic residues.

It belongs to the TNFR8 family. In terms of assembly, interacts with TRAF1, TRAF2, TRAF3 and TRAF5. In terms of processing, phosphorylated on serine and tyrosine residues. Isoform 2 is constitutively phosphorylated. Detected in alveolar macrophages (at protein level).

It is found in the cell membrane. The protein localises to the cytoplasm. Receptor for TNFSF8/CD30L. May play a role in the regulation of cellular growth and transformation of activated lymphoblasts. Regulates gene expression through activation of NF-kappa-B. This is Tumor necrosis factor receptor superfamily member 8 from Homo sapiens (Human).